Consider the following 498-residue polypeptide: Guanosine-5'-triphosphate,3'-diphosphate pyrophosphatase (498 aa).

The protein belongs to the GppA/Ppx family. GppA subfamily.

It carries out the reaction guanosine 3'-diphosphate 5'-triphosphate + H2O = guanosine 3',5'-bis(diphosphate) + phosphate + H(+). The protein operates within purine metabolism; ppGpp biosynthesis; ppGpp from GTP: step 2/2. Its function is as follows. Catalyzes the conversion of pppGpp to ppGpp. Guanosine pentaphosphate (pppGpp) is a cytoplasmic signaling molecule which together with ppGpp controls the 'stringent response', an adaptive process that allows bacteria to respond to amino acid starvation, resulting in the coordinated regulation of numerous cellular activities. The chain is Guanosine-5'-triphosphate,3'-diphosphate pyrophosphatase from Serratia proteamaculans (strain 568).